The chain runs to 551 residues: MKNINPNRTQAWKHLKQHFDDMKSTSINDLFNQDKYRFAHFSKTFNNEILVDYSKNLITNETIIKLISLAIECDLIEAISDMFHGEKINCSEDRAVLHIALRNIKNTPILVDGFNVMPQINAVLNKMKQFCNRVIQGNWTGYTDKIITDIVNIGIGGSNLGPYMVTEALKPYRNHLNMHFVSNIDGTHIFETLKNLNPENTLFVIASKTFTTQETMTNALSARNWFCKATSDAQHISKHFIALSTNTIAVRKFGIDPSENMFKFWDWVGGRYSLWSAIGLPIMLSVGVSNFELLLTGAHDMDIHFYSTPLHENLPVILALIGIWYNNFFQVETEAIFPYDQYMHRFTAYLQQVNMESNGKCVDRNGCPITYQTGPIIWGEPGTNGQHSFYQLLHQGTKMVPCDFIAPAISHNPISDHHEKLISNFFAQTKALAFGNTHLTSMQKYIQSKKNYKHEQCIVPFKLCKGNNPSNSILVKKITPYTLGALIALYEHKIFTQGIIFNIYTFDQWGVELGKQLADSILPELKYESMISKNHDSSTYGLIHCYKSWCG.

Glu-356 acts as the Proton donor in catalysis. Catalysis depends on residues His-387 and Lys-515.

It belongs to the GPI family.

The protein resides in the cytoplasm. The catalysed reaction is alpha-D-glucose 6-phosphate = beta-D-fructose 6-phosphate. It functions in the pathway carbohydrate biosynthesis; gluconeogenesis. Its pathway is carbohydrate degradation; glycolysis; D-glyceraldehyde 3-phosphate and glycerone phosphate from D-glucose: step 2/4. In terms of biological role, catalyzes the reversible isomerization of glucose-6-phosphate to fructose-6-phosphate. The sequence is that of Glucose-6-phosphate isomerase from Blochmanniella pennsylvanica (strain BPEN).